Reading from the N-terminus, the 394-residue chain is Acetate kinase (394 aa).

N7 is a binding site for Mg(2+). K14 is an ATP binding site. Residue R90 coordinates substrate. The Proton donor/acceptor role is filled by D147. ATP contacts are provided by residues 204 to 208 (HLGNG), 278 to 280 (DLR), and 326 to 330 (GIGEN). E380 contacts Mg(2+).

This sequence belongs to the acetokinase family. Homodimer. Mg(2+) serves as cofactor. It depends on Mn(2+) as a cofactor.

It is found in the cytoplasm. The enzyme catalyses acetate + ATP = acetyl phosphate + ADP. It functions in the pathway metabolic intermediate biosynthesis; acetyl-CoA biosynthesis; acetyl-CoA from acetate: step 1/2. Catalyzes the formation of acetyl phosphate from acetate and ATP. Can also catalyze the reverse reaction. The chain is Acetate kinase from Flavobacterium johnsoniae (strain ATCC 17061 / DSM 2064 / JCM 8514 / BCRC 14874 / CCUG 350202 / NBRC 14942 / NCIMB 11054 / UW101) (Cytophaga johnsonae).